A 113-amino-acid chain; its full sequence is Large ribosomal subunit protein bL19 (113 aa).

This sequence belongs to the bacterial ribosomal protein bL19 family.

This protein is located at the 30S-50S ribosomal subunit interface and may play a role in the structure and function of the aminoacyl-tRNA binding site. In Mycolicibacterium gilvum (strain PYR-GCK) (Mycobacterium gilvum (strain PYR-GCK)), this protein is Large ribosomal subunit protein bL19.